Consider the following 242-residue polypeptide: ATP-dependent dethiobiotin synthetase BioD (242 aa).

E12 to V17 contacts ATP. Mg(2+) is bound at residue T16. Residue K37 is part of the active site. Residue S41 coordinates substrate. Residues D51 and E112–G115 each bind ATP. Positions 51 and 112 each coordinate Mg(2+).

The protein belongs to the dethiobiotin synthetase family. Homodimer. The cofactor is Mg(2+).

The protein resides in the cytoplasm. It carries out the reaction (7R,8S)-7,8-diammoniononanoate + CO2 + ATP = (4R,5S)-dethiobiotin + ADP + phosphate + 3 H(+). It participates in cofactor biosynthesis; biotin biosynthesis; biotin from 7,8-diaminononanoate: step 1/2. Functionally, catalyzes a mechanistically unusual reaction, the ATP-dependent insertion of CO2 between the N7 and N8 nitrogen atoms of 7,8-diaminopelargonic acid (DAPA, also called 7,8-diammoniononanoate) to form a ureido ring. This Bacillus anthracis (strain A0248) protein is ATP-dependent dethiobiotin synthetase BioD.